Consider the following 262-residue polypeptide: 2-keto-4-pentenoate hydratase 2 (262 aa).

This sequence belongs to the hydratase/decarboxylase family. MhpD subfamily. A divalent metal cation is required as a cofactor.

It carries out the reaction (S)-4-hydroxy-2-oxopentanoate = (2Z)-2-hydroxypenta-2,4-dienoate + H2O. It participates in aromatic compound metabolism; 3-phenylpropanoate degradation. Functionally, catalyzes the conversion of 2-hydroxypentadienoic acid (enolic form of 2-oxopent-4-enoate) to 4-hydroxy-2-ketopentanoic acid. The sequence is that of 2-keto-4-pentenoate hydratase 2 from Dechloromonas aromatica (strain RCB).